The chain runs to 250 residues: Hydroxyethylthiazole kinase (250 aa).

Residue Met39 participates in substrate binding. Arg114 and Thr159 together coordinate ATP. Position 186 (Gly186) interacts with substrate.

It belongs to the Thz kinase family. The cofactor is Mg(2+).

The enzyme catalyses 5-(2-hydroxyethyl)-4-methylthiazole + ATP = 4-methyl-5-(2-phosphooxyethyl)-thiazole + ADP + H(+). Its pathway is cofactor biosynthesis; thiamine diphosphate biosynthesis; 4-methyl-5-(2-phosphoethyl)-thiazole from 5-(2-hydroxyethyl)-4-methylthiazole: step 1/1. Its function is as follows. Catalyzes the phosphorylation of the hydroxyl group of 4-methyl-5-beta-hydroxyethylthiazole (THZ). The sequence is that of Hydroxyethylthiazole kinase from Lactococcus lactis subsp. cremoris (strain SK11).